The primary structure comprises 211 residues: LexA repressor (211 aa).

The segment at residues 31–51 (RAEISKELGFRSPNAAEEHLK) is a DNA-binding region (H-T-H motif). Active-site for autocatalytic cleavage activity residues include serine 127 and lysine 164.

It belongs to the peptidase S24 family. As to quaternary structure, homodimer.

It catalyses the reaction Hydrolysis of Ala-|-Gly bond in repressor LexA.. Functionally, represses a number of genes involved in the response to DNA damage (SOS response), including recA and lexA. In the presence of single-stranded DNA, RecA interacts with LexA causing an autocatalytic cleavage which disrupts the DNA-binding part of LexA, leading to derepression of the SOS regulon and eventually DNA repair. The polypeptide is LexA repressor (Pasteurella multocida (strain Pm70)).